Reading from the N-terminus, the 106-residue chain is Adipokinetic hormone/corazonin-related peptide (106 aa).

Residues 1–25 (MRNSIYKLIMFAVLCMVLTSSLSYA) form the signal peptide. At Gln-26 the chain carries Pyrrolidone carboxylic acid. At Ala-35 the chain carries Alanine amide. A propeptide spanning residues 39-106 (SLAEAAQSTG…GLPLFSNGHL (68 aa)) is cleaved from the precursor.

This sequence belongs to the AKH/HRTH/RPCH family. In terms of tissue distribution, only expressed in the head and thorax body segments of adults. Is more expressed in adult males than in females.

It is found in the secreted. Functionally, neuropeptide with neuromodulator or neurotransmitter role that activates the adipokinetic hormone/corazonin-related peptide receptor (ACPR). May function in regulation of post-ecdysis activities. Does not activate the A.gambiae adipokinetic hormone (AKH) and corazonin (CRZ) receptors. The sequence is that of Adipokinetic hormone/corazonin-related peptide from Aedes aegypti (Yellowfever mosquito).